The sequence spans 219 residues: Mediator of RNA polymerase II transcription subunit 20b (219 aa).

The protein belongs to the Mediator complex subunit 20 family. In terms of assembly, component of the Mediator complex.

It localises to the nucleus. Component of the Mediator complex, a coactivator involved in the regulated transcription of nearly all RNA polymerase II-dependent genes. Mediator functions as a bridge to convey information from gene-specific regulatory proteins to the basal RNA polymerase II transcription machinery. The Mediator complex, having a compact conformation in its free form, is recruited to promoters by direct interactions with regulatory proteins and serves for the assembly of a functional preinitiation complex with RNA polymerase II and the general transcription factors. This is Mediator of RNA polymerase II transcription subunit 20b (MED20B) from Arabidopsis thaliana (Mouse-ear cress).